We begin with the raw amino-acid sequence, 448 residues long: Phosphoglucosamine mutase (448 aa).

S99 serves as the catalytic Phosphoserine intermediate. Positions 99, 239, 241, and 243 each coordinate Mg(2+). S99 is subject to Phosphoserine.

The protein belongs to the phosphohexose mutase family. Mg(2+) is required as a cofactor. Post-translationally, activated by phosphorylation.

It carries out the reaction alpha-D-glucosamine 1-phosphate = D-glucosamine 6-phosphate. Catalyzes the conversion of glucosamine-6-phosphate to glucosamine-1-phosphate. The protein is Phosphoglucosamine mutase of Lachnoclostridium phytofermentans (strain ATCC 700394 / DSM 18823 / ISDg) (Clostridium phytofermentans).